A 223-amino-acid polypeptide reads, in one-letter code: Ribonuclease 3 (223 aa).

An RNase III domain is found at 4–127 (LNRLEEHLGY…LMGAIYLESG (124 aa)). Glu-40 is a Mg(2+) binding site. The active site involves Asp-44. Asp-113 and Glu-116 together coordinate Mg(2+). The active site involves Glu-116. In terms of domain architecture, DRBM spans 154 to 223 (DYKTTLQEIT…AWKVLQGMNI (70 aa)).

Belongs to the ribonuclease III family. Homodimer. Mg(2+) serves as cofactor.

It localises to the cytoplasm. It catalyses the reaction Endonucleolytic cleavage to 5'-phosphomonoester.. Its function is as follows. Digests double-stranded RNA. Involved in the processing of primary rRNA transcript to yield the immediate precursors to the large and small rRNAs (23S and 16S). Processes some mRNAs, and tRNAs when they are encoded in the rRNA operon. Processes pre-crRNA and tracrRNA of type II CRISPR loci if present in the organism. This is Ribonuclease 3 from Campylobacter fetus subsp. fetus (strain 82-40).